Here is a 348-residue protein sequence, read N- to C-terminus: (+)-germacrene D synthase (348 aa).

Aspartate 97, aspartate 101, asparagine 242, and serine 246 together coordinate Mg(2+). Residues 97–101 carry the DDXXD motif motif; that stretch reads DDILD.

It belongs to the terpene synthase family. Mg(2+) serves as cofactor.

The enzyme catalyses (2E,6E)-farnesyl diphosphate = (+)-germacrene D + diphosphate. It participates in secondary metabolite biosynthesis; terpenoid biosynthesis. Functionally, sesquiterpene synthase converting farnesyl diphosphate to eight sesquiterpenes, with (+)-germacrene D and an unidentified oxygenated sesquiterpene as the major products. Has no diterpene synthase activity. The chain is (+)-germacrene D synthase from Selaginella moellendorffii (Spikemoss).